We begin with the raw amino-acid sequence, 276 residues long: Glutamate racemase (276 aa).

Residues 10-11 and 42-43 each bind substrate; these read DS and YG. C73 acts as the Proton donor/acceptor in catalysis. Position 74 to 75 (74 to 75) interacts with substrate; that stretch reads NS. C183 serves as the catalytic Proton donor/acceptor. 184 to 185 provides a ligand contact to substrate; the sequence is TH.

It belongs to the aspartate/glutamate racemases family.

It carries out the reaction L-glutamate = D-glutamate. The protein operates within cell wall biogenesis; peptidoglycan biosynthesis. In terms of biological role, provides the (R)-glutamate required for cell wall biosynthesis. In Parafrankia sp. (strain EAN1pec), this protein is Glutamate racemase.